The chain runs to 109 residues: MQTLPKERRYETLSYLPPLTDVQIEKQVQYILSQGYIPAVEFNEVSEPTELYWTLWKLPLFGAKTSREVLAEVQSCRSQYPGHYIRVVGFDNIKQCQILSFIVHKPSRY.

This sequence belongs to the RuBisCO small chain family. As to quaternary structure, heterohexadecamer of 8 large and 8 small subunits. Forms complexes of many stoichiometries with Raf1 and RbcL.

It localises to the carboxysome. In terms of biological role, ruBisCO catalyzes two reactions: the carboxylation of D-ribulose 1,5-bisphosphate, the primary event in carbon dioxide fixation, as well as the oxidative fragmentation of the pentose substrate in the photorespiration process. Both reactions occur simultaneously and in competition at the same active site. Although the small subunit is not catalytic it is essential for maximal activity. This Nostoc sp. (strain PCC 7120 / SAG 25.82 / UTEX 2576) protein is Ribulose bisphosphate carboxylase small subunit.